The following is a 242-amino-acid chain: Aspartate/glutamate leucyltransferase (242 aa).

This sequence belongs to the R-transferase family. Bpt subfamily.

Its subcellular location is the cytoplasm. The enzyme catalyses N-terminal L-glutamyl-[protein] + L-leucyl-tRNA(Leu) = N-terminal L-leucyl-L-glutamyl-[protein] + tRNA(Leu) + H(+). The catalysed reaction is N-terminal L-aspartyl-[protein] + L-leucyl-tRNA(Leu) = N-terminal L-leucyl-L-aspartyl-[protein] + tRNA(Leu) + H(+). Functions in the N-end rule pathway of protein degradation where it conjugates Leu from its aminoacyl-tRNA to the N-termini of proteins containing an N-terminal aspartate or glutamate. The sequence is that of Aspartate/glutamate leucyltransferase from Alcanivorax borkumensis (strain ATCC 700651 / DSM 11573 / NCIMB 13689 / SK2).